Here is a 367-residue protein sequence, read N- to C-terminus: Chorismate synthase (367 aa).

An NADP(+)-binding site is contributed by Arg48. Residues 125–127, 238–239, Gly278, 293–297, and Arg319 contribute to the FMN site; these read RSS, NA, and KPTSS.

It belongs to the chorismate synthase family. In terms of assembly, homotetramer. Requires FMNH2 as cofactor.

It carries out the reaction 5-O-(1-carboxyvinyl)-3-phosphoshikimate = chorismate + phosphate. It functions in the pathway metabolic intermediate biosynthesis; chorismate biosynthesis; chorismate from D-erythrose 4-phosphate and phosphoenolpyruvate: step 7/7. Catalyzes the anti-1,4-elimination of the C-3 phosphate and the C-6 proR hydrogen from 5-enolpyruvylshikimate-3-phosphate (EPSP) to yield chorismate, which is the branch point compound that serves as the starting substrate for the three terminal pathways of aromatic amino acid biosynthesis. This reaction introduces a second double bond into the aromatic ring system. The polypeptide is Chorismate synthase (Halorhodospira halophila (strain DSM 244 / SL1) (Ectothiorhodospira halophila (strain DSM 244 / SL1))).